We begin with the raw amino-acid sequence, 3080 residues long: Protein PIEZO homolog (3080 aa).

6 helical membrane-spanning segments follow: residues 28-48 (YIYFIFFLLSILCLPHKSLIL), 57-77 (PIITLVLSMFSLILQLLVNVV), 86-106 (LSVNILTAFGFYKYNSFWIVF), 113-133 (VIVFVISLFTIILWFKNLVYP), 204-224 (YPSIINVIYFVFTILIILLLA), and 232-252 (VMLKCYPILLITSLCHLLFVY). Residue Asn276 is glycosylated (N-linked (GlcNAc...) asparagine). A helical transmembrane segment spans residues 285–305 (WPLVIGYITVLLLYISTCILF). Residues Asn312 and Asn339 are each glycosylated (N-linked (GlcNAc...) asparagine). 2 helical membrane-spanning segments follow: residues 362–382 (ILVVCFFLTASVASAILLASG) and 396–416 (VIYIILLYFLVFISAQYIFNI). The N-linked (GlcNAc...) asparagine glycan is linked to Asn434. A helical membrane pass occupies residues 438-458 (WLYIGVQIVVSLTLSLYCFYS). The disordered stretch occupies residues 469 to 548 (KKDQQSQQSQ…GGGIIRPRKP (80 aa)). Residues 473-505 (QSQQSQPQPQQQQQQQQSSQNNQIQQSPLQYQQ) are compositionally biased toward low complexity. The span at 512–532 (ISNKSLPSSPMSTKSTTVHIQ) shows a compositional bias: polar residues. Asn514, Asn567, and Asn606 each carry an N-linked (GlcNAc...) asparagine glycan. 3 consecutive transmembrane segments (helical) span residues 672 to 692 (GLTSINLLNAGYMLFFIVFVI), 700 to 720 (FWMCLIIYAQMVLLTLYIWQL), and 740 to 760 (YGSPLWVGLIWHIIIITFSII). N-linked (GlcNAc...) asparagine glycosylation is present at Asn795. 3 helical membrane-spanning segments follow: residues 827–847 (FCYLVIVIVSIFTKISLINIV), 849–869 (MATVFLCLLIHHISANGSIHI), and 872–892 (FWIIIILSQGVVLVARYIMQF). Residue Asn918 is glycosylated (N-linked (GlcNAc...) asparagine). The chain crosses the membrane as a helical span at residues 928–948 (LFGCSSILVVCVFQLTVFFSI). N-linked (GlcNAc...) asparagine glycosylation is present at Asn992. 2 helical membrane passes run 1036–1056 (FAISIAEYNFFNFIYLIMIVI) and 1067–1087 (IGSFLLFYSQLWVLTQLAALL). Asn1109 carries an N-linked (GlcNAc...) asparagine glycan. The segment at 1158-1185 (QQQRKLEEHEEEYEEEEDQFGNKKNNDK) is disordered. Over residues 1166–1176 (HEEEYEEEEDQ) the composition is skewed to acidic residues. N-linked (GlcNAc...) asparagine glycosylation is found at Asn1191, Asn1240, and Asn1251. Residues 1199-1253 (DDGNNNNNNNNNNNNNNNNNNNNNNNNNNNNNNNNNNNNNNNQSNNENNENNNNS) are disordered. Residues 1202 to 1252 (NNNNNNNNNNNNNNNNNNNNNNNNNNNNNNNNNNNNNNNQSNNENNENNNN) are compositionally biased toward low complexity. 3 helical membrane-spanning segments follow: residues 1281–1301 (VLAFALFWRLNILGMIYLIII), 1316–1336 (IYVSALLAPTILIQYLLILVV), and 1360–1380 (LLLLSIPDRYVLVIDFLVLFF). N-linked (GlcNAc...) asparagine glycosylation is found at Asn1424 and Asn1440. 2 helical membrane passes run 1472 to 1492 (VILIVIFLAGTAECDILSCFY) and 1519 to 1539 (IYNWLVLMAQIIFQVAVILYF). Asn1559 and Asn1589 each carry an N-linked (GlcNAc...) asparagine glycan. A helical membrane pass occupies residues 1619–1639 (IETGPLSISTISDVIIMVLLA). Positions 1704 to 1714 (RINRRKNRHNH) are enriched in basic residues. The disordered stretch occupies residues 1704–1812 (RINRRKNRHN…NPLSNSSSTV (109 aa)). Residues 1715–1742 (YYNNNPNNNYNNNNNNNNSNSSNSNNNN) are compositionally biased toward low complexity. N-linked (GlcNAc...) asparagine glycans are attached at residues Asn1731, Asn1734, Asn1763, Asn1768, Asn1771, Asn1779, Asn1807, and Asn1864. Residues 1762–1782 (KNTTNQNATNSTYSPFANSTM) show a composition bias toward polar residues. Residues 1789 to 1812 (NNNNNNNNNNNFNNNPLSNSSSTV) are compositionally biased toward low complexity. 2 disordered regions span residues 1873 to 1899 (LQQEQQQQQEQQQQLNPQQQQSQSSKE) and 1958 to 2032 (SQLL…TSSS). Residues 1958-2021 (SQLLQQQQQQ…NNNNNNNNNN (64 aa)) show a composition bias toward low complexity. N-linked (GlcNAc...) asparagine glycosylation is present at Asn2027. 2 helical membrane-spanning segments follow: residues 2078 to 2098 (IANGVFYNSIISLVYLLAVFL) and 2112 to 2132 (FWRFMIGYSSLIICLKYVFQI). Asn2148 carries an N-linked (GlcNAc...) asparagine glycan. A helical membrane pass occupies residues 2199-2219 (VFGLYIIDGHFISGAFWDLAI). The interval 2277–2367 (LNNSPISLNS…NNNNNNNNNN (91 aa)) is disordered. Asn2285 carries an N-linked (GlcNAc...) asparagine glycan. Residues 2288 to 2367 (NNNNNNNNNN…NNNNNNNNNN (80 aa)) show a composition bias toward low complexity. The next 2 helical transmembrane spans lie at 2427–2447 (IIIYPFKWLFVSIIEYVWLAI) and 2457–2477 (YYMPLLFTDFACLFFLVIFPQ). An N-linked (GlcNAc...) asparagine glycan is attached at Asn2478. The next 4 helical transmembrane spans lie at 2500-2520 (YIVILLAQFGVIILDRIIYLY), 2530-2550 (QIVLTVLYHVFLFFYFPDLIV), 2553-2573 (FSFGYTWPLVVFYLMKCIYLY), and 2671-2691 (FVTGVTFFIGLVILLWFPLII). N-linked (GlcNAc...) asparagine glycosylation is found at Asn2762, Asn2790, Asn2837, Asn2840, Asn2848, Asn2858, Asn2908, Asn2913, and Asn2935. Residues 2835 to 2863 (QSNNSNNSNNPNENSSSGSDDNNNNSNNN) form a disordered region. Residues 2836-2863 (SNNSNNSNNPNENSSSGSDDNNNNSNNN) show a composition bias toward low complexity. A helical membrane pass occupies residues 2955–2975 (ITSTLVSAGIIGLYVSVVLSV). The tract at residues 3054–3080 (PTINSTLNNQNNQNNNNNNNNNHEKIN) is disordered. A glycan (N-linked (GlcNAc...) asparagine) is linked at Asn3057. Residues 3061 to 3074 (NNQNNQNNNNNNNN) show a composition bias toward low complexity.

The protein belongs to the PIEZO (TC 1.A.75) family.

It localises to the membrane. The chain is Protein PIEZO homolog from Dictyostelium discoideum (Social amoeba).